The following is a 1452-amino-acid chain: Pleiotropic drug resistance protein 1 (1452 aa).

The region spanning 152–425 is the ABC transporter 1 domain; it reads LNYLHILPNR…FEYMGFICPE (274 aa). Residue 185–192 coordinates ATP; it reads GPPSSGKT. An ABC transmembrane type-2 1 domain is found at 504-716; the sequence is LLKACTAREY…AQNAIAVNEF (213 aa). Transmembrane regions (helical) follow at residues 521–541, 554–574, 609–629, 640–660, 664–684, 694–714, and 753–773; these read FVYIFKMIQLTLMASITMTLF, GAVFLGALFYALIMIMFNGFS, IPITLVEVAIWVCMTYYVIGF, LLLLICVNQMASGLFRLMGAL, IIVANTFGSFVLLTVLVMGGF, WWIWGYWISPMMYAQNAIAVN, and IGAGALIGYVFLFNFLFAVAL. A disordered region spans residues 808–830; sequence LGKSSSEKGNDVRRSASSRSMSS. Residues 812-821 are compositionally biased toward basic and acidic residues; sequence SSEKGNDVRR. One can recognise an ABC transporter 2 domain in the interval 855-1107; sequence ITFDDIRYAV…HLIKYFEGID (253 aa). 900 to 907 contacts ATP; sequence GVSGAGKT. The region spanning 1180–1394 is the ABC transmembrane type-2 2 domain; sequence TQCMACFWKQ…TLYGLIASQF (215 aa). 7 helical membrane passes run 1199-1219, 1239-1259, 1287-1307, 1314-1334, 1344-1364, 1375-1395, and 1421-1441; these read YTAVRIMFTFFIALMFGTIFW, YIAVLFLGVQNATTVQPVIAI, LPYLFLQTIIYGVIVYAMIGF, FFWYLFFMYFTLLYFTLYGMM, IAAIISSAFYAVWNLFCGFIV, WYYYICPISWTLYGLIASQFG, and FVGYVALILVGISVLFLFIFA.

Belongs to the ABC transporter superfamily. ABCG family. PDR (TC 3.A.1.205) subfamily. As to expression, expressed in root hypodermal passage cells. Expressed in stem tissues, particularly the vasculature and nodes adjacent to leaf axils.

Its subcellular location is the cell membrane. Cellular strigolactone (SL) transporter required for the exudation of SL from the root to the soil. The presence of SL in the vicinity of the roots is required for development of symbiotic interactions with arbuscular mycorrhizal fungi (AMF). Transports SL in the above ground tissues and is required for the control of shoot branching. SL regulates plant shoot architecture by inhibiting the outgrowth of axillary buds. Involved in the regulation of shootward and outward directional strigolactone transport in roots. Due to its polar localization in root cells, mediates directional shootward strigolactone transport, as well as localized outward directional transport for exudation to the soil. This Petunia axillaris (Large white petunia) protein is Pleiotropic drug resistance protein 1.